We begin with the raw amino-acid sequence, 294 residues long: MKPFLRWCFVATALTLAGCSNTSWRKSEVLAVPLQPTLQQEVILARMEQILASRALTDDERAQLLYERGVLYDSLGLRALARNDFSQALAIRPDMPEVFNYLGIYLTQAGNFDAAYEAFDSVLELDPTYNYAHLNRGIALYYGGRDKLAQDDLLAFYQDDPNDPFRSLWLYLAEQKLDEKQAKEVLKQHFEKSDKEQWGWNIVEFYLGNISEQTLMERLKADATDNTSLAEHLSETNFYLGKYYLSLGDLDSATALFKLAVANNVHNFVEHRYALLELSLLGQDQDDLAESDQQ.

The first 18 residues, 1–18 (MKPFLRWCFVATALTLAG), serve as a signal peptide directing secretion. The N-palmitoyl cysteine moiety is linked to residue cysteine 19. Cysteine 19 is lipidated: S-diacylglycerol cysteine. TPR repeat units lie at residues 62-95 (AQLLYERGVLYDSLGLRALARNDFSQALAIRPDM), 96-129 (PEVFNYLGIYLTQAGNFDAAYEAFDSVLELDPTY), and 234-267 (SETNFYLGKYYLSLGDLDSATALFKLAVANNVHN).

Homodimer.

Its subcellular location is the cell membrane. May be involved in cell division. May play a role in bacterial septation or regulation of cell wall degradation during cell division. The polypeptide is Lipoprotein NlpI (nlpI) (Escherichia coli O157:H7).